The primary structure comprises 89 residues: Small ribosomal subunit protein bS20 (89 aa).

The segment at 68 to 89 (PNKGARKSSRLDHFVNEQKSKQ) is disordered. A compositionally biased stretch (basic and acidic residues) spans 76 to 89 (SRLDHFVNEQKSKQ).

It belongs to the bacterial ribosomal protein bS20 family.

In terms of biological role, binds directly to 16S ribosomal RNA. This is Small ribosomal subunit protein bS20 from Mycoplasmopsis agalactiae (strain NCTC 10123 / CIP 59.7 / PG2) (Mycoplasma agalactiae).